The primary structure comprises 547 residues: Oncoprotein-induced transcript 3 protein (547 aa).

The first 19 residues, 1–19, serve as a signal peptide directing secretion; sequence MPQLLLLACLLIIVTRVAP. N-linked (GlcNAc...) asparagine glycans are attached at residues Asn89 and Asn116. Residues 182 to 222 enclose the EGF-like; calcium-binding domain; sequence DENECEQNNGGCSEICVNLKNSYRCECGIGRVLRSDGKTCE. 3 disulfides stabilise this stretch: Cys186-Cys197, Cys193-Cys206, and Cys208-Cys221. Residues 267–516 enclose the ZP domain; the sequence is FCKSNTIEVS…SRCAQGCHRR (250 aa). Asn299 is a glycosylation site (N-linked (GlcNAc...) asparagine). Residues 520–547 are disordered; the sequence is EASTEGEDASGPRSQMLTGGPISIDWED.

The protein resides in the nucleus envelope. May be involved in hepatocellular function and development. In Bos taurus (Bovine), this protein is Oncoprotein-induced transcript 3 protein (OIT3).